The following is a 344-amino-acid chain: Transcription factor HRS1 (344 aa).

Positions 88–184 (IKDSSTSNEE…DGGGGRKQRR (97 aa)) are disordered. A compositionally biased stretch (acidic residues) spans 95 to 104 (NEEEDEEFDD). 2 stretches are compositionally biased toward basic and acidic residues: residues 105 to 124 (EHGN…KSDW) and 138 to 178 (LLPK…DGGG). The HTH myb-type domain maps to 178–238 (GGRKQRRCWS…HLQKYRLHTR (61 aa)). Positions 209 to 234 (PKQIREFMKVDGLTNDEVKSHLQKYR) form a DNA-binding region, H-T-H motif. Over residues 269 to 291 (STGKTTGGATTSSTTTTTGIYGT) the composition is skewed to low complexity. The segment at 269-322 (STGKTTGGATTSSTTTTTGIYGTMAAPPPPQWPSHSNYRPSIIVDEGSGSHSEG) is disordered.

Expressed in the root hair region and root hair cells.

It is found in the nucleus. In terms of biological role, transcription factor involved in nitrate and phosphate signaling in roots. Integrates nitrate and phosphate starvation responses and adaptation of root architecture depending on nutrient availabilities. Acts downstream of the nitrate sensor and transporter NPF6.3/NRT1.1. Represses primary root development in response to phosphate deficiency conditions, only when nitrate is present. Involved in the modulation of primary root and root hair growth in phosphate-deprived environment. May be required for suppressing abscisic acid (ABA) signaling in germinating embryo axis, which promotes the timely germination of seeds. The chain is Transcription factor HRS1 from Arabidopsis thaliana (Mouse-ear cress).